Consider the following 681-residue polypeptide: Peroxisomal acyl-coenzyme A oxidase 2 (681 aa).

Residues Ser-3 and Ser-9 each carry the phosphoserine modification. N6-succinyllysine occurs at positions 66, 137, 303, 453, 561, and 667. Residues 679-681 (HKM) carry the Microbody targeting signal motif.

This sequence belongs to the acyl-CoA oxidase family. As to quaternary structure, homodimer. FAD is required as a cofactor. Most abundant in liver. Also expressed in kidney. Not present in any other tissues tested.

The protein resides in the peroxisome. The catalysed reaction is (25R)-3alpha,7alpha,12alpha-trihydroxy-5beta-cholestan-26-oyl-CoA + A + H2O = (24R,25R)-3alpha,7alpha,12alpha,24-tetrahydroxy-5beta-cholestan-26-oyl-CoA + AH2. It carries out the reaction (25S)-3alpha,7alpha,12alpha-trihydroxy-5beta-cholestan-26-oyl-CoA + O2 = (24E)-3alpha,7alpha,12alpha-trihydroxy-5beta-cholest-24-en-26-oyl-CoA + H2O2. Functionally, oxidizes the CoA esters of the bile acid intermediates di- and tri-hydroxycoprostanic acids. Capable of oxidizing short as well as long chain 2-methyl branched fatty acids. The protein is Peroxisomal acyl-coenzyme A oxidase 2 of Rattus norvegicus (Rat).